Consider the following 1472-residue polypeptide: ABC multidrug transporter atrI (1472 aa).

The tract at residues 1–28 (MRRSNVVPVHSLTSSTNTGRDSRGEKYD) is disordered. Residues 134–384 (FRRETWNFRN…FERQGWFCPP (251 aa)) form the ABC transporter 1 domain. N-linked (GlcNAc...) asparagine glycans are attached at residues Asn143, Asn277, Asn308, and Asn332. Helical transmembrane passes span 506-526 (ILAL…AGFY), 530-550 (ATLF…INSL), 580-600 (IPVK…LSGL), 605-625 (SQFF…SAVF), 639-659 (MTLA…VVPV), 664-684 (PWFK…ILIA), and 744-764 (FGIL…ATEL). A compositionally biased stretch (basic and acidic residues) spans 784 to 793 (AHLKNGHEPG). Residues 784–821 (AHLKNGHEPGADEEAGAGKTVVSSSAEENKQDQGITSI) form a disordered region. Residues 804–821 (VVSSSAEENKQDQGITSI) show a composition bias toward polar residues. The ABC transporter 2 domain occupies 828-1070 (FTWRDVVYDI…TLLKYFESHG (243 aa)). Residue 864 to 871 (GVSGAGKT) participates in ATP binding. Helical transmembrane passes span 1168–1188 (YIAA…FSFF), 1204–1224 (VFML…LFIT), 1244–1264 (FMIA…ILVF), 1282–1302 (LVLL…DFVI), 1309–1329 (ETAG…NGVM), and 1337–1357 (GFWI…GMAA). Residue Asn1402 is glycosylated (N-linked (GlcNAc...) asparagine). A helical transmembrane segment spans residues 1433-1453 (FGIFWAYVVFDIAVAVMLYYC). Asn1460 carries N-linked (GlcNAc...) asparagine glycosylation.

Belongs to the ABC transporter superfamily. ABCG family. PDR (TC 3.A.1.205) subfamily.

It localises to the cell membrane. It carries out the reaction itraconazole(in) + ATP + H2O = itraconazole(out) + ADP + phosphate + H(+). It catalyses the reaction voriconazole(in) + ATP + H2O = voriconazole(out) + ADP + phosphate + H(+). The enzyme catalyses fluconazole(in) + ATP + H2O = fluconazole(out) + ADP + phosphate + H(+). Functionally, pleiotropic ABC efflux transporter involved in the basal level of azole susceptibility. Confers resistance to fluconazole, itraconazole and voriconazole. The protein is ABC multidrug transporter atrI of Aspergillus fumigatus (strain ATCC MYA-4609 / CBS 101355 / FGSC A1100 / Af293) (Neosartorya fumigata).